A 521-amino-acid polypeptide reads, in one-letter code: BAR/IMD domain-containing adapter protein 2 (521 aa).

The region spanning 1 to 250 is the IMD domain; it reads MSLSRSEEMH…VQLMQQMGNS (250 aa). A coiled-coil region spans residues 132-153; it reads DALDKCQAELKKLRKKSQGSKN. Residues S262, S324, S326, and S337 each carry the phosphoserine modification. A disordered region spans residues 297-370; sequence APVMNGVSGP…TLPRSSSMAA (74 aa). A compositionally biased stretch (low complexity) spans 321-333; the sequence is QPKSTSPPQSQSK. A Phosphothreonine modification is found at T341. The residue at position 347 (S347) is a Phosphoserine. The span at 353–368 shows a compositional bias: polar residues; that stretch reads SYATTENKTLPRSSSM. T361 bears the Phosphothreonine mark. Phosphoserine is present on residues S367, S385, S396, and S455. The SH3 domain maps to 375-438; the sequence is NGRMRVKAIF…PFSYTRVLDN (64 aa). The interval 450–471 is disordered; that stretch reads QGKSSSTGNLLDKEDLALPPPD.

As to quaternary structure, homodimer. Interacts with CDC42 and RAC1 that have been activated by GTP binding. Interacts with ATN1, ADGRB1, DIAPH1, EPS8, SHANK1, SHANK2, SHANK3, TIAM1, WASF1 and WASF2. Interacts with ENAH after recruitment of CDC42. Phosphorylated on tyrosine residues by INSR in response to insulin treatment.

Its subcellular location is the cytoplasm. It localises to the membrane. It is found in the cell projection. The protein resides in the filopodium. The protein localises to the ruffle. Its subcellular location is the cytoskeleton. Functionally, adapter protein that links membrane-bound small G-proteins to cytoplasmic effector proteins. Necessary for CDC42-mediated reorganization of the actin cytoskeleton and for RAC1-mediated membrane ruffling. Involved in the regulation of the actin cytoskeleton by WASF family members and the Arp2/3 complex. Plays a role in neurite growth. Acts syngeristically with ENAH to promote filipodia formation. Plays a role in the reorganization of the actin cytoskeleton in response to bacterial infection. Participates in actin bundling when associated with EPS8, promoting filopodial protrusions. This is BAR/IMD domain-containing adapter protein 2 (BAIAP2) from Bos taurus (Bovine).